A 513-amino-acid polypeptide reads, in one-letter code: Maturase K (513 aa).

This sequence belongs to the intron maturase 2 family. MatK subfamily.

The protein localises to the plastid. It localises to the chloroplast. Usually encoded in the trnK tRNA gene intron. Probably assists in splicing its own and other chloroplast group II introns. This is Maturase K from Saccharum officinarum (Sugarcane).